Consider the following 114-residue polypeptide: Iron-sulfur cluster insertion protein ErpA (114 aa).

Residues Cys42, Cys106, and Cys108 each coordinate iron-sulfur cluster.

It belongs to the HesB/IscA family. Homodimer. It depends on iron-sulfur cluster as a cofactor.

Required for insertion of 4Fe-4S clusters for at least IspG. The polypeptide is Iron-sulfur cluster insertion protein ErpA (Sodalis glossinidius (strain morsitans)).